A 215-amino-acid polypeptide reads, in one-letter code: 3-demethoxyubiquinol 3-hydroxylase (215 aa).

6 residues coordinate Fe cation: Glu64, Glu94, His97, Glu146, Glu178, and His181.

The protein belongs to the COQ7 family. It depends on Fe cation as a cofactor.

It localises to the cell membrane. It carries out the reaction a 5-methoxy-2-methyl-3-(all-trans-polyprenyl)benzene-1,4-diol + AH2 + O2 = a 3-demethylubiquinol + A + H2O. The protein operates within cofactor biosynthesis; ubiquinone biosynthesis. Functionally, catalyzes the hydroxylation of 2-nonaprenyl-3-methyl-6-methoxy-1,4-benzoquinol during ubiquinone biosynthesis. The polypeptide is 3-demethoxyubiquinol 3-hydroxylase (Coxiella burnetii (strain RSA 331 / Henzerling II)).